We begin with the raw amino-acid sequence, 91 residues long: Probable Thioredoxin (91 aa).

Positions 1–91 constitute a Glutaredoxin domain; it reads MVMMKLFTSP…LKGGEEYGAS (91 aa). Cysteines 12 and 15 form a disulfide.

This sequence belongs to the glutaredoxin family.

Its subcellular location is the cytoplasm. Its function is as follows. Acts to maintain redox homeostasis; functions as a protein disulfide reductase. The polypeptide is Probable Thioredoxin (Archaeoglobus fulgidus (strain ATCC 49558 / DSM 4304 / JCM 9628 / NBRC 100126 / VC-16)).